We begin with the raw amino-acid sequence, 337 residues long: Major outer membrane protein P.IB (337 aa).

The N-terminal stretch at 1 to 19 is a signal peptide; it reads MKKSLIALTLAALPVAAMA.

The protein belongs to the Gram-negative porin family. In terms of assembly, homotrimer.

The protein localises to the cell outer membrane. In terms of biological role, serves as a slightly cation selective porin. The protein is Major outer membrane protein P.IB (por) of Neisseria lactamica.